The following is a 228-amino-acid chain: Putative N-acetylmannosamine-6-phosphate 2-epimerase (228 aa).

It belongs to the NanE family.

It catalyses the reaction an N-acyl-D-glucosamine 6-phosphate = an N-acyl-D-mannosamine 6-phosphate. The protein operates within amino-sugar metabolism; N-acetylneuraminate degradation; D-fructose 6-phosphate from N-acetylneuraminate: step 3/5. Functionally, converts N-acetylmannosamine-6-phosphate (ManNAc-6-P) to N-acetylglucosamine-6-phosphate (GlcNAc-6-P). The sequence is that of Putative N-acetylmannosamine-6-phosphate 2-epimerase from Pasteurella multocida (strain Pm70).